The following is a 526-amino-acid chain: Tyrosine-protein kinase transforming protein Src (526 aa).

Positions 1–57 are disordered; that stretch reads MGSSKSKPKDPSQRRCSLEPPDSTHHGGFPASQTPNKTAAPDTHRTPSRSFGTVATE. Residue G2 is the site of N-myristoyl glycine; by host attachment. Positions 7-25 are enriched in basic and acidic residues; it reads KPKDPSQRRCSLEPPDSTH. The SH3 domain occupies 81–142; it reads GGVTTFVALY…PSNYVAPSDS (62 aa). The SH2 domain maps to 148–245; that stretch reads WYFGKITRRE…GLCHRLTNVC (98 aa). The Protein kinase domain occupies 267–517; the sequence is LRLEVKLGQG…TFEYLQAQLL (251 aa). ATP contacts are provided by residues 273–281 and K295; that span reads LGQGCFGEV. D386 functions as the Proton acceptor in the catalytic mechanism. The residue at position 416 (Y416) is a Phosphotyrosine; by autocatalysis.

It belongs to the protein kinase superfamily. Tyr protein kinase family. SRC subfamily. Post-translationally, the phosphorylated form is termed pp60v-src.

It catalyses the reaction L-tyrosyl-[protein] + ATP = O-phospho-L-tyrosyl-[protein] + ADP + H(+). Its function is as follows. This phosphoprotein, required for both the initiation and the maintenance of neoplastic transformation, is a protein kinase that catalyzes the phosphorylation of tyrosine residues in vitro. This chain is Tyrosine-protein kinase transforming protein Src (V-SRC), found in Galliformes.